The following is a 303-amino-acid chain: Dehydrodolichyl diphosphate synthase 1 (303 aa).

The helical transmembrane segment at Leu-14–Phe-34 threads the bilayer.

This sequence belongs to the UPP synthase family. The cofactor is Mg(2+). In terms of tissue distribution, expressed in low levels in the whole plant. Preferentially expressed in roots.

Its subcellular location is the endoplasmic reticulum membrane. It catalyses the reaction n isopentenyl diphosphate + (2E,6E)-farnesyl diphosphate = a di-trans,poly-cis-polyprenyl diphosphate + n diphosphate. The protein operates within protein modification; protein glycosylation. Catalyzes cis-prenyl chain elongation to produce the polyprenyl backbone of dolichol, a glycosyl carrier-lipid required for the biosynthesis of several classes of glycoprotein. The polypeptide is Dehydrodolichyl diphosphate synthase 1 (DPS) (Arabidopsis thaliana (Mouse-ear cress)).